The following is a 281-amino-acid chain: Putative phosphatase/phosphodiesterase MPN_349 (281 aa).

The Fe cation site is built by D12, E43, N44, and N71. The active-site Proton donor is H72. 3 residues coordinate Fe cation: H158, H183, and H185.

Belongs to the YmdB-like family. The cofactor is Fe(3+).

This is Putative phosphatase/phosphodiesterase MPN_349 from Mycoplasma pneumoniae (strain ATCC 29342 / M129 / Subtype 1) (Mycoplasmoides pneumoniae).